The following is a 411-amino-acid chain: Stearoyl-[acyl-carrier-protein] 9-desaturase 2, chloroplastic (411 aa).

The transit peptide at 1 to 44 directs the protein to the chloroplast; that stretch reads MALLLNSTITVAMKQNPLVAVSFPRTTCLGSSFSPPRLLRVSCV. Fe cation-binding residues include Glu-148, Glu-186, His-189, Glu-239, Glu-272, and His-275.

Belongs to the fatty acid desaturase type 2 family. Homodimer. Requires Fe(2+) as cofactor. In terms of tissue distribution, preferentially expressed in roots and flowers.

It localises to the plastid. The protein resides in the chloroplast. It carries out the reaction octadecanoyl-[ACP] + 2 reduced [2Fe-2S]-[ferredoxin] + O2 + 2 H(+) = (9Z)-octadecenoyl-[ACP] + 2 oxidized [2Fe-2S]-[ferredoxin] + 2 H2O. The protein operates within lipid metabolism; fatty acid metabolism. In terms of biological role, converts stearoyl-ACP to oleoyl-ACP by introduction of a cis double bond between carbons 9 and 10 of the acyl chain. Exhibits delta-9 palmitoyl-[acyl-carrier-protein] desaturase (PAD) activity. Involved in omega-7 monounsaturated fatty acid biosynthesis, especially in the endosperm oil. The protein is Stearoyl-[acyl-carrier-protein] 9-desaturase 2, chloroplastic (S-ACP-DES2) of Arabidopsis thaliana (Mouse-ear cress).